The following is a 241-amino-acid chain: GLIPR1-like protein 1 (241 aa).

Residues 1–22 (MILRKKLSYLWTLGLCLVASKS) form the signal peptide. An SCP domain is found at 39-172 (LRLHNEARTN…PDSALLVCNY (134 aa)). S220 carries GPI-anchor amidated serine lipidation. Positions 221 to 241 (GTRQLIACNPLYLISVLLTIF) are cleaved as a propeptide — removed in mature form.

It belongs to the CRISP family. In terms of assembly, part of a oolemmal binding multimeric complex (IZUMO1 complex) composed at least of IZUMO1 and GLIPR1L1; the complex assemblage is influenced by the maturation status of the male germ cell. Interacts with IZUMO1. Post-translationally, N-glycosylated. N-glycosylation decreases during the transit in the caput. Highly expressed in testis, where it localizes to round and elongating spermatids and differentiated spermatozoa in the seminiferous tubules and epididymis (at protein level).

Its subcellular location is the cytoplasmic vesicle. The protein resides in the secretory vesicle. It is found in the acrosome. It localises to the cell membrane. The protein localises to the membrane raft. Its function is as follows. Required for optimal fertilization at the stage of sperm-oocyte fusion, plays a role in optimizing acrosome function, the translocation of IZUMO1 during the acrosome reaction and the fertilization process. Component of epididymosomes, one type of membranous microvesicules which mediate the transfer of lipids and proteins to spermatozoa plasma membrane during epididymal maturation. Also a component of the CD9-positive microvesicules found in the cauda region. The chain is GLIPR1-like protein 1 from Bos taurus (Bovine).